The chain runs to 291 residues: ATP synthase gamma chain (291 aa).

It belongs to the ATPase gamma chain family. As to quaternary structure, F-type ATPases have 2 components, CF(1) - the catalytic core - and CF(0) - the membrane proton channel. CF(1) has five subunits: alpha(3), beta(3), gamma(1), delta(1), epsilon(1). CF(0) has three main subunits: a, b and c.

It localises to the cell inner membrane. Functionally, produces ATP from ADP in the presence of a proton gradient across the membrane. The gamma chain is believed to be important in regulating ATPase activity and the flow of protons through the CF(0) complex. This Xanthobacter autotrophicus (strain ATCC BAA-1158 / Py2) protein is ATP synthase gamma chain.